Here is a 508-residue protein sequence, read N- to C-terminus: MEFQKSPDGGWGWVIVVVSFFTQFLSYGSPLAVGVLYVEWLDAFGEGKGKTAWVGSLASGVGLLASPVCSLFVSSFGARPVTIFSGFLVAGGLMLSSLAPNIYFLFFSYGIVVGLGCGLLYTATVTITCQYFDSRRGLALGLISTGSSVGLFIYAALQRMLIEFYGLDGCLLIVGALALNILACGSLMRPLQTSDCPFPEKTAPENVPDRYSMYNEKEKNPEETMNFQDKGYSSEDKCLPNGDWGRETSLPKSLAIAAHTKEPETYKKKVVEQTNFCKQLAKRKWQLYRNYCGETASLFKNKVFSALFIAILLFDIGGFPPSLLMEDVARSYHVREEDLTMPLISIFGIMTAVGKLLLGILADFKWINTLYLYVATLIITGLALCAIPFAKSYVTLAILSGILGFLTGNWSIFPYVTTKTVGIDKLAHAYGILMFFAGLGNSLGPPIVGWFYDWTQTYDIAFYFSGFCVLLGGFILLLAILPCWDMCNKKLPKPAVPTTFFYKVASNV.

Over 1-12 the chain is Cytoplasmic; the sequence is MEFQKSPDGGWG. A run of 12 helical transmembrane segments spans residues 13–33, 53–73, 80–100, 102–122, 137–157, 164–184, 303–323, 341–361, 370–390, 396–416, 431–451, and 460–480; these read WVIV…PLAV, WVGS…SLFV, PVTI…SLAP, IYFL…LLYT, GLAL…YAAL, FYGL…ILAC, VFSA…PPSL, MPLI…LGIL, LYLY…IPFA, LAIL…FPYV, GILM…VGWF, and IAFY…LLAI. Residues 481-508 are Cytoplasmic-facing; it reads LPCWDMCNKKLPKPAVPTTFFYKVASNV.

This sequence belongs to the major facilitator superfamily. Monocarboxylate porter (TC 2.A.1.13) family.

The protein resides in the cell membrane. It carries out the reaction creatine(in) = creatine(out). The catalysed reaction is (R)-carnitine(in) = (R)-carnitine(out). In terms of biological role, extracellular pH-and Na(+)-sensitive low-affinity creatine transporter. Also functions as a pH-independent carnitine efflux transporter. In Mus musculus (Mouse), this protein is Monocarboxylate transporter 9 (Slc16a9).